Reading from the N-terminus, the 675-residue chain is Putative elongation factor TypA-like SVR3, chloroplastic (675 aa).

Residues 1 to 58 (MELSLSTSSASPAVLRRQASPLLHKQQVLGVSFASALKPGGGALRFPSRRPLPRPITC) constitute a chloroplast transit peptide. Residues 43–76 (ALRFPSRRPLPRPITCSASPSTAEPASEVKKKQL) are disordered. A compositionally biased stretch (low complexity) spans 59–68 (SASPSTAEPA). Positions 80-275 (DNVRNIAIVA…AIIRCVPGPN (196 aa)) constitute a tr-type G domain.

This sequence belongs to the TRAFAC class translation factor GTPase superfamily. Classic translation factor GTPase family. BipA subfamily.

It localises to the plastid. The protein localises to the chloroplast. Functionally, putative chloroplastic elongation factor involved in response to chilling stress. Required for proper chloroplast rRNA processing and/or translation at low temperature. Involved in plastid protein homeostasis. This chain is Putative elongation factor TypA-like SVR3, chloroplastic (SVR3), found in Arabidopsis thaliana (Mouse-ear cress).